A 949-amino-acid polypeptide reads, in one-letter code: Piwi-like protein 2 (949 aa).

The disordered stretch occupies residues 1–125; it reads MDPTRPPFRG…SLSTRVQQAS (125 aa). Over residues 115 to 125 the composition is skewed to polar residues; sequence PSLSTRVQQAS. Positions 366–478 constitute a PAZ domain; that stretch reads SVLDIMNILY…LLPELAFMTG (113 aa). Residues 644–935 enclose the Piwi domain; that stretch reads LLVCLISGTR…LAFLSGQFLH (292 aa). Catalysis depends on residues Asp721, Glu759, Asp791, and His924.

This sequence belongs to the argonaute family. Piwi subfamily. As to quaternary structure, component of the PET complex. It depends on Mg(2+) as a cofactor. Post-translationally, methylated on arginine residues; required for the interaction with Tudor domain-containing protein and subsequent localization to the meiotic nuage, also named P granule. Expressed in oocytes, testis and liver (at protein level).

The protein resides in the cytoplasm. The protein localises to the nucleus. In terms of biological role, endoribonuclease that plays a central role during spermatogenesis by repressing transposable elements and preventing their mobilization, which is essential for the germline integrity. Plays an essential role in meiotic differentiation of spermatocytes, germ cell differentiation and in self-renewal of spermatogonial stem cells. Acts via the piRNA metabolic process, which mediates the repression of transposable elements during meiosis by forming complexes composed of piRNAs and Piwi proteins and govern the methylation and subsequent repression of transposons. During piRNA biosynthesis, plays a key role in the piRNA amplification loop, also named ping-pong amplification cycle, by acting as a 'slicer-competent' piRNA endoribonuclease that cleaves primary piRNAs, which are then loaded onto 'slicer-incompetent' piwil4. Piwil2 slicing produces a pre-miRNA intermediate, which is then processed in mature piRNAs, and as well as a 16 nucleotide by-product that is degraded. Required for piwil4/miwi2 nuclear localization and association with secondary piRNAs antisense. Represses circadian rhythms by promoting the stability and activity of core clock components BMAL1 and CLOCK. The polypeptide is Piwi-like protein 2 (piwil2) (Xenopus tropicalis (Western clawed frog)).